Here is a 106-residue protein sequence, read N- to C-terminus: Phosphoribosyl-ATP pyrophosphatase 1 (106 aa).

Belongs to the PRA-PH family.

It localises to the cytoplasm. The enzyme catalyses 1-(5-phospho-beta-D-ribosyl)-ATP + H2O = 1-(5-phospho-beta-D-ribosyl)-5'-AMP + diphosphate + H(+). It participates in amino-acid biosynthesis; L-histidine biosynthesis; L-histidine from 5-phospho-alpha-D-ribose 1-diphosphate: step 2/9. This is Phosphoribosyl-ATP pyrophosphatase 1 (hisE1) from Bradyrhizobium diazoefficiens (strain JCM 10833 / BCRC 13528 / IAM 13628 / NBRC 14792 / USDA 110).